The chain runs to 560 residues: Arginine--tRNA ligase (560 aa).

The 'HIGH' region signature appears at 122–132 (ANPNGPLHVGH).

This sequence belongs to the class-I aminoacyl-tRNA synthetase family.

It is found in the cytoplasm. It catalyses the reaction tRNA(Arg) + L-arginine + ATP = L-arginyl-tRNA(Arg) + AMP + diphosphate. This is Arginine--tRNA ligase from Methanosphaera stadtmanae (strain ATCC 43021 / DSM 3091 / JCM 11832 / MCB-3).